Here is a 209-residue protein sequence, read N- to C-terminus: Uracil phosphoribosyltransferase (209 aa).

Residues Arg-78, Arg-103, and 130–138 (DPMLATAGS) contribute to the 5-phospho-alpha-D-ribose 1-diphosphate site. Residues Ile-193 and 198–200 (GDA) contribute to the uracil site. Asp-199 contributes to the 5-phospho-alpha-D-ribose 1-diphosphate binding site.

This sequence belongs to the UPRTase family. The cofactor is Mg(2+).

It catalyses the reaction UMP + diphosphate = 5-phospho-alpha-D-ribose 1-diphosphate + uracil. Its pathway is pyrimidine metabolism; UMP biosynthesis via salvage pathway; UMP from uracil: step 1/1. With respect to regulation, allosterically activated by GTP. In terms of biological role, catalyzes the conversion of uracil and 5-phospho-alpha-D-ribose 1-diphosphate (PRPP) to UMP and diphosphate. This chain is Uracil phosphoribosyltransferase, found in Methylibium petroleiphilum (strain ATCC BAA-1232 / LMG 22953 / PM1).